Reading from the N-terminus, the 1066-residue chain is E3 ubiquitin-protein ligase PDZRN3 (1066 aa).

The RING-type; degenerate zinc-finger motif lies at Cys18–Cys56. The TRAF-type zinc finger occupies Glu100–Gly158. 2 consecutive PDZ domains span residues Thr249–Thr339 and Glu419–Pro503. Position 427 is a phosphoserine (Ser427). The segment at Gln545–Gln603 is disordered. Positions Thr554–Asn563 are enriched in polar residues. Residues Gln564–Glu582 show a composition bias toward basic and acidic residues. The segment covering Thr594–Gln603 has biased composition (polar residues). The stretch at Glu679–Arg704 forms a coiled coil. Residues Thr744 to Ser754 show a composition bias toward basic and acidic residues. Disordered regions lie at residues Thr744 to Ser778 and Leu808 to Tyr863. 2 stretches are compositionally biased toward polar residues: residues Ser755–Leu769 and Gly845–Leu855. Positions Lys975–Met1025 form a coiled coil.

Interacts with NLGN1 and EFNB2. Interacts with UBE2D2 and with MUSK via the first PDZ domain. In terms of processing, auto-ubiquitinated. Widely expressed, including in the heart, skeletal muscle and liver and, at lower levels, in the brain, colon, small intestine, placenta and lung. Down-regulated in ovarian serous papillary tumors.

The protein resides in the synapse. It localises to the cytoplasm. It carries out the reaction S-ubiquitinyl-[E2 ubiquitin-conjugating enzyme]-L-cysteine + [acceptor protein]-L-lysine = [E2 ubiquitin-conjugating enzyme]-L-cysteine + N(6)-ubiquitinyl-[acceptor protein]-L-lysine.. It participates in protein modification; protein ubiquitination. In terms of biological role, E3 ubiquitin-protein ligase. Plays an important role in regulating the surface level of MUSK on myotubes. Mediates the ubiquitination of MUSK, promoting its endocytosis and lysosomal degradation. Might contribute to terminal myogenic differentiation. The polypeptide is E3 ubiquitin-protein ligase PDZRN3 (PDZRN3) (Homo sapiens (Human)).